Reading from the N-terminus, the 193-residue chain is Crossover junction endodeoxyribonuclease RuvC (193 aa).

Catalysis depends on residues Asp-7, Glu-68, and Asp-141. The Mg(2+) site is built by Asp-7, Glu-68, and Asp-141. A disordered region spans residues 174–193; that stretch reads RQWAQATQHATRRRGVRRGM. Residues 183-193 are compositionally biased toward basic residues; the sequence is ATRRRGVRRGM.

This sequence belongs to the RuvC family. Homodimer which binds Holliday junction (HJ) DNA. The HJ becomes 2-fold symmetrical on binding to RuvC with unstacked arms; it has a different conformation from HJ DNA in complex with RuvA. In the full resolvosome a probable DNA-RuvA(4)-RuvB(12)-RuvC(2) complex forms which resolves the HJ. The cofactor is Mg(2+).

It is found in the cytoplasm. The catalysed reaction is Endonucleolytic cleavage at a junction such as a reciprocal single-stranded crossover between two homologous DNA duplexes (Holliday junction).. In terms of biological role, the RuvA-RuvB-RuvC complex processes Holliday junction (HJ) DNA during genetic recombination and DNA repair. Endonuclease that resolves HJ intermediates. Cleaves cruciform DNA by making single-stranded nicks across the HJ at symmetrical positions within the homologous arms, yielding a 5'-phosphate and a 3'-hydroxyl group; requires a central core of homology in the junction. The consensus cleavage sequence is 5'-(A/T)TT(C/G)-3'. Cleavage occurs on the 3'-side of the TT dinucleotide at the point of strand exchange. HJ branch migration catalyzed by RuvA-RuvB allows RuvC to scan DNA until it finds its consensus sequence, where it cleaves and resolves the cruciform DNA. In Bifidobacterium animalis subsp. lactis (strain AD011), this protein is Crossover junction endodeoxyribonuclease RuvC.